Reading from the N-terminus, the 417-residue chain is Gamma-glutamyl phosphate reductase (417 aa).

This sequence belongs to the gamma-glutamyl phosphate reductase family.

It is found in the cytoplasm. The catalysed reaction is L-glutamate 5-semialdehyde + phosphate + NADP(+) = L-glutamyl 5-phosphate + NADPH + H(+). It participates in amino-acid biosynthesis; L-proline biosynthesis; L-glutamate 5-semialdehyde from L-glutamate: step 2/2. Catalyzes the NADPH-dependent reduction of L-glutamate 5-phosphate into L-glutamate 5-semialdehyde and phosphate. The product spontaneously undergoes cyclization to form 1-pyrroline-5-carboxylate. The protein is Gamma-glutamyl phosphate reductase of Escherichia coli (strain K12 / MC4100 / BW2952).